Reading from the N-terminus, the 213-residue chain is MSILSIVLTGFGLAMDAFAVSVAKGITLTRVKAKDALKVALFFGGFQALMPLIGWGAGRYFADYIKAFDHWIAFILLGFIGGKMIFEALKEDDEEKAEVAVSMEVSKNKEREFANMKRKEELSAKNLTVLAIATSIDALAVGVSFAFLGISIVQTIIIIGIITFVLCFLGVIIGEKLGDIFKNYAEIVGGVILILIGINILLEHTGIIEKLFS.

6 helical membrane-spanning segments follow: residues 3 to 23 (ILSI…VSVA), 36 to 56 (ALKV…IGWG), 67 to 87 (AFDH…MIFE), 130 to 150 (LAIA…FLGI), 152 to 172 (IVQT…LGVI), and 187 to 207 (IVGG…HTGI).

It belongs to the MntP (TC 9.B.29) family.

Its subcellular location is the cell membrane. Functionally, probably functions as a manganese efflux pump. This is Putative manganese efflux pump MntP from Clostridium perfringens (strain ATCC 13124 / DSM 756 / JCM 1290 / NCIMB 6125 / NCTC 8237 / Type A).